The following is a 557-amino-acid chain: MGNHKAALTKQVFTFASELYAYGVREVVISPGSRSTPLALAFEAHPNIKTWIHPDERSAAFFAVGLIKGSERPVAILCTSGTAAANYTPAIAESQISRIPLIVLTSDRPHELRSVGAPQAINQVNMFNNYVSYEFDMPIADDSKETINAIYYQMQIASQYLYGPHKGPIHFNLPFRDPLTPDLNATELLTSEMKILPHYQKSIDASALRHILNKKKGLIIVGDMQHQEVDQILTYSTIYDLPILADPLSHLRKFDHPNVICTYDLLFRSGLDLNVDFVIRVGKPVISKKLNQWLKKTDAFQILVQNNDKIDVFPIAPDISYEISANDFFRSLMEDTTINRVSWLEKWQRLEKKGRKEIKCYLEQATDESAFVGELIKKTSEKDALFISNSMPIRDVDNLLLNKNIDVYANRGANGIDGIVSTALGMAVHKRITLLIGDLSFYHDMNGLLMSKLNNIQMNIVLLNNDGGGIFSYLPQKESATDYFERLFGTPTGLDFEYTAKLYQFDFKRFNSVSEFKNATLLSETSTIYELITNREDNFKQHQILYQKLSEMIHGTL.

It belongs to the TPP enzyme family. MenD subfamily. As to quaternary structure, homodimer. Requires Mg(2+) as cofactor. Mn(2+) serves as cofactor. The cofactor is thiamine diphosphate.

It carries out the reaction isochorismate + 2-oxoglutarate + H(+) = 5-enolpyruvoyl-6-hydroxy-2-succinyl-cyclohex-3-ene-1-carboxylate + CO2. It participates in quinol/quinone metabolism; 1,4-dihydroxy-2-naphthoate biosynthesis; 1,4-dihydroxy-2-naphthoate from chorismate: step 2/7. It functions in the pathway quinol/quinone metabolism; menaquinone biosynthesis. In terms of biological role, catalyzes the thiamine diphosphate-dependent decarboxylation of 2-oxoglutarate and the subsequent addition of the resulting succinic semialdehyde-thiamine pyrophosphate anion to isochorismate to yield 2-succinyl-5-enolpyruvyl-6-hydroxy-3-cyclohexene-1-carboxylate (SEPHCHC). The chain is 2-succinyl-5-enolpyruvyl-6-hydroxy-3-cyclohexene-1-carboxylate synthase from Staphylococcus aureus (strain MSSA476).